The chain runs to 1574 residues: MAERGLEPSPAAVAALPPEVRAQLAELELELSEGDITQKGYEKKRSKLLSPYSPQTQETDSIGQKERNQTPAPTAAQTSAPSKYHRSRSGGARDERYRSDIHTEAVQAALAKHKEQKMALPMPTKRRSTFVQSPADACTPPDTSSASEDEGSLRRQAALSAALQQSLQNAESWINRSIQGSSTSSSASSTLSHGEVKGTSGSLADVFANTRIENVSAPPDVTATTSSSSSSLRPANIDLPPSGIVKGMHKGSNRSSLMDTADGVPVNSRVSTKIQQLLNTLKRPKRPPLKEFFVDDSEEIVEGIPQPDPNQPKPEGRQMTPVKGEPLGVICNWPPALESALQRWGSTQAKCPCLTGLDVTGKPVYTLTYGKLWSRSLKLAYTLLNKLGTKNEPVLKPGDRVALVYPNNDPVMFMVAFYGCLLAEVIPVPIEVPLTRKDAGGQQIGFLLGSCGIALALTSEICLKGLPKTQNGEIVQFKGWPRLKWVVTDSKYLSKPPKDWQPHISPAGTEPAYIEYKTSKEGSVMGVTVSRLAMLSQCQALSQACNYSEGETVVNVLDFKKDAGLWHGMFANVMNKMHTISVPYSVMKTCPLSWVQRVHAHKAKVALVKCRDLHWAMMAHRDQRDVSLSSLRMLIVTDGANPWSVSSCDAFLSLFQSHGLKPEAICPCATSAEAMTVAIRRPGVPGAPLPGRAILSMNGLSYGVIRVNTEDKNSALTVQDVGHVMPGGMMCIVKPDGLPQLCRTDEIGEICVSSRTGGMMYFGLAGVTKNTFEVIPVTSSGSPVGDVPFIRSGLLGFVGPGSLVFVVGKMDGLLMVSGRRHNADDIVATGLAVESIKTVYRGRIAVFSVSVFYDERIVVVAEQRPDASEEDSFQWMSRVLQAIDSIHQVGVYCLALVPANTLPKTPLGGIHISQTKQLFLEGSLHPCNILMCPHTCVTNLPKPRQKQPGVGPASVMVGNLVAGKRIAQAAGRDLGQIEENDLVRKHQFLAEILQWRAQATPDHVLFMLLNAKGTTVCTASCLQLHKRAERIASVLGDKGHLNAGDNVVLLYPPGIELIAAFYGCLYAGCIPVTVRPPHAQNLTATLPTVRMVVDVSKAACVLTTQTLMRLLKSREAAAAVDVKTWPAIIDTDDLPRKRLPQLYKPPTPEMLAYLDFSVSTTGMLTGVKMSHSAVNALCRAIKLQCELYSSRQIAICLDPYCGLGFALWCLCSVYSGHQSVLIPPMELENNLFLWLATVNQYKIRDTFCSYSVMELCTKGLGNQVEVLKTRGINLSCIRTCVVVAEERPRVSLQQSFSKLFKDIGLSPRAVSTTFGSRVNVAICLQGTSGPDPTTVYVDLKSLRHDRVRLVERGAPQSLLLSESGKILPGVKVVIVNPETKGPVGDSHLGEIWVNSPHTASGYYTIYDSETLQADHFNTRLSFGDAAQTLWARTGYLGFVRRTELTAATGERHDALYVVGALDETLELRGLRYHPIDIETSVSRVHRSIAECAVFTWTNLLVVVVELCGSEQEALDLVPLVTNVVLEEHYLIVGVVVVVDPGVVPINSRGEKQRMHLRDSFLADQLDPIYVAYNM.

Residues serine 9, serine 50, and serine 53 each carry the phosphoserine modification. A DMAP1-binding domain is found at 12 to 130; it reads AVAALPPEVR…PMPTKRRSTF (119 aa). Residues 31–166 are disordered; that stretch reads LSEGDITQKG…AALSAALQQS (136 aa). Over residues 52 to 62 the composition is skewed to polar residues; the sequence is YSPQTQETDSI. A compositionally biased stretch (low complexity) spans 69–82; sequence QTPAPTAAQTSAPS. Threonine 70 bears the Phosphothreonine mark. Residues 91–103 show a composition bias toward basic and acidic residues; the sequence is GARDERYRSDIHT. Serine 99 carries the phosphoserine modification. Threonine 139 carries the post-translational modification Phosphothreonine. Phosphoserine is present on residues serine 145, serine 147, and serine 152. The segment covering 154-166 has biased composition (low complexity); it reads RRQAALSAALQQS. Phosphoserine occurs at positions 177, 192, and 202. The disordered stretch occupies residues 178-200; it reads IQGSSTSSSASSTLSHGEVKGTS. Positions 181-192 are enriched in low complexity; it reads SSTSSSASSTLS. A disordered region spans residues 217 to 244; it reads APPDVTATTSSSSSSLRPANIDLPPSGI. Serine 256 bears the Phosphoserine mark.

Belongs to the DIP2 family. In terms of assembly, interacts with alpha-tubulin. In terms of tissue distribution, highly expressed in brain and spinal cord (at protein level). In brain, expression is detected in the main olfactory bulb, cortex, lateral ventricle, cornu ammonis 1, cornu ammonis 3, dentate gyrus, striatum, cerebellar cortex and medial habenula. Expressed primarily in neurons including excitatory pyramidal neurons and inhibitory interneurons.

It is found in the cell projection. Its subcellular location is the dendrite. It localises to the axon. The protein resides in the perikaryon. In terms of biological role, negatively regulates axonal outgrowth and is essential for normal synaptic transmission. Not required for regulation of axon polarity. Promotes acetylation of alpha-tubulin. This is Disco-interacting protein 2 homolog B (Dip2b) from Mus musculus (Mouse).